A 518-amino-acid chain; its full sequence is PTS system mannitol-specific EIICB component (518 aa).

The Cytoplasmic portion of the chain corresponds to 1 to 31 (MDTMSNSQQNKGIGRKVQAFGSFLSSMIMPN). The region spanning 20–352 (FGSFLSSMIM…LKFTKDPKQD (333 aa)) is the PTS EIIC type-2 domain. A helical transmembrane segment spans residues 32–53 (IGAFIAWGFIAAIFIDNGWFPN). Topologically, residues 54 to 57 (KDLA) are extracellular. Residues 58–78 (QLAGPMITYLIPLLIAFSGGR) form a helical membrane-spanning segment. Residues 79-142 (LIHDLRGGII…QGFEMLFNNF (64 aa)) are Cytoplasmic-facing. The chain crosses the membrane as a helical span at residues 143 to 164 (SAGILGFIMTIFGFEVLAPIMK). Residues 165–173 (FIMHILSVG) are Extracellular-facing. Residues 174–194 (VEALVHAHLLPLVSILVEPAK) form a helical membrane-spanning segment. Residues 195–281 (IVFLNNAINH…VLMRPLLFVS (87 aa)) are Cytoplasmic-facing. A helical membrane pass occupies residues 282 to 301 (VILGGMTGVATYSLLDFGFK). The Extracellular portion of the chain corresponds to 302–321 (TPASPGSIIVYAINAPKGEF). The chain crosses the membrane as a helical span at residues 322 to 343 (LHMLTGVVLAALVSFVVSALIL). Residues 344 to 518 (KFTKDPKQDL…LINNLKEDQD (175 aa)) are Cytoplasmic-facing. A disordered region spans residues 369 to 406 (SVASKLSAKDDNKAADNKTAETTTATAASNKAEDKDSD). The span at 375–387 (SAKDDNKAADNKT) shows a compositional bias: basic and acidic residues. Over residues 388–398 (AETTTATAASN) the composition is skewed to low complexity. The PTS EIIB type-2 domain occupies 426 to 518 (DHVIFACDAG…LINNLKEDQD (93 aa)). Catalysis depends on C432, which acts as the Phosphocysteine intermediate. C432 is subject to Phosphocysteine; by EIIA.

In terms of assembly, homodimer.

The protein localises to the cell membrane. It carries out the reaction D-mannitol(out) + N(pros)-phospho-L-histidyl-[protein] = D-mannitol 1-phosphate(in) + L-histidyl-[protein]. Functionally, the phosphoenolpyruvate-dependent sugar phosphotransferase system (sugar PTS), a major carbohydrate active transport system, catalyzes the phosphorylation of incoming sugar substrates concomitantly with their translocation across the cell membrane. The enzyme II CmtAB PTS system is involved in D-mannitol transport. The polypeptide is PTS system mannitol-specific EIICB component (Staphylococcus carnosus).